A 797-amino-acid polypeptide reads, in one-letter code: Adhesion G-protein coupled receptor G7 (797 aa).

Residues 1–26 (MASCRAWNLRVLVAVVCGLLTGIILG) form the signal peptide. Residues 27–438 (LGIWRIVIRI…QYPKSLDILS (412 aa)) are Extracellular-facing. Residues Asn82, Asn159, Asn178, Asn191, Asn247, Asn261, Asn312, Asn316, and Asn387 are each glycosylated (N-linked (GlcNAc...) asparagine). The region spanning 275-428 (FSVQKGASSS…AVLMTFKKDY (154 aa)) is the GAIN-B domain. Intrachain disulfides connect Cys383-Cys410 and Cys398-Cys412. Positions 383-428 (CVYWNLSAKDWDTYGCQKDKGTDGFLRCRCNHTTNFAVLMTFKKDY) are GPS. An N-linked (GlcNAc...) asparagine glycan is attached at Asn413. Residues 439-459 (NVGCALSVTGLALTVIFQIVT) traverse the membrane as a helical segment. Residues 460–468 (RKVRKTSVT) are Cytoplasmic-facing. The helical transmembrane segment at 469-489 (WVLVNLCISMLIFNLLFVFGI) threads the bilayer. The Extracellular portion of the chain corresponds to 490 to 528 (ENSNKNLQTSDGDINNIDFDNNDIPRTDTINIPNPMCTA). The chain crosses the membrane as a helical span at residues 529–549 (IAALLHYFLLVTFTWNALSAA). Topologically, residues 550–565 (QLYYLLIRTMKPLPRH) are cytoplasmic. A helical membrane pass occupies residues 566–586 (FILFISLIGWGVPAIVVAITV). Over 587–623 (GVIYSQNGNNPQWELDYRQEKICWLAIPEPNGVIKSP) the chain is Extracellular. A helical membrane pass occupies residues 624–644 (LLWSFIVPVTIILISNVVMFI). Topologically, residues 645-669 (TISIKVLWKNNQNLTSTKKVSSMKK) are cytoplasmic. The chain crosses the membrane as a helical span at residues 670–690 (IVSTLSVAVVFGITWILAYLM). Residues 691–698 (LVNDDSIR) lie on the Extracellular side of the membrane. Residues 699–719 (IVFSYIFCLFNTTQGLQIFIL) traverse the membrane as a helical segment. At 720-797 (YTVRTKVFQS…SESDNAKESI (78 aa)) the chain is on the cytoplasmic side.

The protein belongs to the G-protein coupled receptor 2 family. Adhesion G-protein coupled receptor (ADGR) subfamily.

It is found in the membrane. Functionally, orphan receptor. The polypeptide is Adhesion G-protein coupled receptor G7 (ADGRG7) (Homo sapiens (Human)).